We begin with the raw amino-acid sequence, 231 residues long: Aquaporin Z (231 aa).

Helical transmembrane passes span 9 to 29 (LLGT…AAAF) and 34 to 54 (IGFV…IYAV). An NPA 1 motif is present at residues 63–65 (NPA). 3 consecutive transmembrane segments (helical) span residues 82–102 (IPYI…LYVI), 133–153 (SAIV…IGAT), and 160–180 (GFAP…SIPI). Positions 186–188 (NPA) match the NPA 2 motif. A helical transmembrane segment spans residues 202–222 (LEQLWFFWVMPIIGGIVGGGI).

This sequence belongs to the MIP/aquaporin (TC 1.A.8) family. As to quaternary structure, homotetramer.

It is found in the cell inner membrane. The enzyme catalyses H2O(in) = H2O(out). Functionally, channel that permits osmotically driven movement of water in both directions. It is involved in the osmoregulation and in the maintenance of cell turgor during volume expansion in rapidly growing cells. It mediates rapid entry or exit of water in response to abrupt changes in osmolarity. The sequence is that of Aquaporin Z from Photorhabdus laumondii subsp. laumondii (strain DSM 15139 / CIP 105565 / TT01) (Photorhabdus luminescens subsp. laumondii).